Consider the following 549-residue polypeptide: Sphingosine-1-phosphate transporter SPNS2 (549 aa).

2 disordered regions span residues 14 to 36 and 78 to 97; these read AEEE…GAGG and PGCA…PASL. 11 helical membrane-spanning segments follow: residues 141–161, 169–189, 202–222, 229–249, 261–281, 320–340, 364–384, 398–418, 422–442, 466–486, and 507–527; these read GLLQ…FGYL, VILS…SFIP, LVGI…GDLF, LMLS…YITG, WALR…LILV, LATS…PLYL, LIFG…GAGA, LVCA…FVAA, IVGA…NWAI, TSHL…SDLI, and LCPF…LFFL.

This sequence belongs to the major facilitator superfamily. Spinster (TC 2.A.1.49) family. Expression is high in the lungs and liver, low in the lymph nodes, spleen and bone marrow, and very low but detectable in the thymus. Not expressed in red blood cells. Also expressed in the inner ear: expressed in the cochlea, both in the lateral wall and organ of Corti.

The protein resides in the cell membrane. Its subcellular location is the endosome membrane. It catalyses the reaction sphing-4-enine 1-phosphate(in) = sphing-4-enine 1-phosphate(out). It carries out the reaction sphinganine 1-phosphate(in) = sphinganine 1-phosphate(out). Lipid transporter that specifically mediates export of sphingosine-1-phosphate (sphing-4-enine 1-phosphate, S1P) and sphinganine-1-phosphate in the lymph, thereby playing a role in lymphocyte trafficking. S1P is a bioactive signaling molecule that regulates many physiological processes important for the development and for the immune system. Regulates levels of S1P and the S1P gradient that exists between the high circulating concentrations of S1P and low tissue levels that control lymphocyte trafficking. Required for the egress of T-cells from lymph nodes during an immune response by mediating S1P secretion, which generates a gradient that enables activated T-cells to access lymph. Also required for the egress of immature B-cells from the bone marrow. In contrast, it does not mediate S1P release from red blood cells. Involved in auditory function: S1P release in the inner ear is required for maintenance of the endocochlear potential in the cochlea. In addition to export, also able to mediate S1P import. The polypeptide is Sphingosine-1-phosphate transporter SPNS2 (Mus musculus (Mouse)).